A 452-amino-acid polypeptide reads, in one-letter code: Scaffold protein ILK (452 aa).

An N-acetylmethionine modification is found at Met1. ANK repeat units follow at residues 2–30 (DDIFTQCREGNAVAVRLWLDNTENDLNQG), 31–63 (DDHGFSPLHWACREGRSAVVEMLIMRGARINVM), 64–96 (NRGDDTPLHLAASHGHRDIVQKLLQYKADINAV), 97–129 (NEHGNVPLHYACFWGQDQVAEDLVANGALVSIC), and 130–174 (NKYG…GTTR). The interval 33 to 139 (HGFSPLHWAC…NKYGEMPVDK (107 aa)) is interaction with LIMS1. A Phosphothreonine; by PAK1 modification is found at Thr173. Residues 180 to 212 (GTLNKHSGIDFKQLNFLTKLNENHSGELWKGRW) are PH-like; mediates interaction with TGFB1I1. Ser186 is subject to Phosphoserine. The Protein kinase domain maps to 193-446 (LNFLTKLNEN…PKFDMIVPIL (254 aa)). ATP contacts are provided by Asn200, Asn202, His203, Ser204, and Lys220. The residue at position 246 (Ser246) is a Phosphoserine; by PAK1. ATP contacts are provided by His270, Met272, and Asn279. A Mg(2+)-binding site is contributed by Asp339. Lys341 is an ATP binding site. Residues 363–371 (KKPEDTNRR) carry the Nuclear localization signal motif. An N6-acetyllysine modification is found at Lys426.

This sequence belongs to the protein kinase superfamily. TKL Ser/Thr protein kinase family. Component of the heterotrimeric IPP (ILK-PINCH-PARVIN) complex composed of ILK, LIMS1/PINCH and PARVA; the complex binds to F-actin via the C-terminal tail of LIMS1 and the N-terminal region of PARVA, promoting F-actin filament bundling. Formation of the IPP complex is dependent on protein kinase C and precedes integrin-mediated cell adhesion and spreading. ILK also interacts with LIMS2/PINCH2 and with PARVB and PARVG which may substitute for LIMS1 and PARVA in the IPP complex; PARVA and PARVB compete for the same binding site. Interaction with PARVG promotes the establishment of cell polarity required for leukocyte migration. Interacts with the cytoplasmic domain of integrin ITGB1 and may also interact with integrins ITGB2, ITGB3 and/or ITGB5. Interacts probably also with TGFB1I1. Interacts (via ANK repeats) with EPHA1 (via SAM domain); stimulated by EFNA1 but independent of the kinase activity of EPHA1. Interacts with FERMT2. Interacts with LIMD2; leading to activate the protein kinase activity. Interacts with PXN/PAXILLIN (via LD motif 4). Interacts with CCDC25 (via cytoplasmic region); initiating the ILK-PARVB cascade to induce cytoskeleton rearrangement and directional migration of cells. Interacts with IQGAP1; the interaction is required for localization of IQGAP1 to the cell cortex. Post-translationally, phosphorylation by PAK1 modulates ILK subcellular location by promoting its nuclear export. As to expression, highly expressed in heart followed by skeletal muscle, pancreas and kidney. Weakly expressed in placenta, lung and liver.

The protein localises to the cell junction. It is found in the focal adhesion. The protein resides in the cell membrane. Its subcellular location is the cell projection. It localises to the lamellipodium. The protein localises to the cytoplasm. It is found in the myofibril. The protein resides in the sarcomere. Its subcellular location is the nucleus. It localises to the cytoskeleton. The protein localises to the microtubule organizing center. It is found in the centrosome. The protein resides in the cell cortex. Scaffold protein which mediates protein-protein interactions during a range of cellular events including focal adhesion assembly, cell adhesion and cell migration. Regulates integrin-mediated signal transduction by contributing to inside-out integrin activation. Recruits PARVA and LIMS1/PITCH to form the heterotrimeric IPP (ILK-PINCH-PARVIN) complex which binds to F-actin via the C-terminal tail of LIMS1 and the N-terminal region of PARVA, promoting F-actin filament bundling, a process required to generate force for actin cytoskeleton reorganization and subsequent dynamic cell adhesion events such as cell spreading and migration. Binding to PARVA promotes effective assembly of ILK into focal adhesions while PARVA-bound ILK can simultaneously engage integrin-beta cytoplasmic tails to mediate cell adhesion. Plays a role with PARVG in promoting the cell adhesion and spreading of leukocytes. Acts as an upstream effector of both AKT1/PKB and GSK3. Mediates trafficking of caveolae to the cell surface in an ITGB1-dependent manner by promoting the recruitment of IQGAP1 to the cell cortex which cooperates with its effector DIAPH1 to locally stabilize microtubules and allow stable insertion of caveolae into the plasma membrane. Required for the maintenance of mitotic spindle integrity by promoting phosphorylation of TACC3 by AURKA. Associates with chromatin and may act as a negative regulator of transcription when located in the nucleus. This is Scaffold protein ILK from Homo sapiens (Human).